Here is a 328-residue protein sequence, read N- to C-terminus: Spermatogenesis- and oogenesis-specific basic helix-loop-helix-containing protein 1 (328 aa).

The bHLH domain maps to 53 to 104; that stretch reads SCLRRNVISERERRKRMSLSCERLRALLPQFDGRREDMASVLEMSVQFLRLA. The interval 290 to 328 is disordered; that stretch reads EAGSALGSDVDDGTSFLLTAGPSSWPGEWGPGFRAGPPA. The span at 310 to 321 shows a compositional bias: low complexity; the sequence is GPSSWPGEWGPG.

In terms of assembly, forms both hetero- and homodimers with SOHLH2.

The protein resides in the cytoplasm. It localises to the nucleus. In terms of biological role, transcription regulator of both male and female germline differentiation. Suppresses genes involved in spermatogonial stem cells maintenance, and induces genes important for spermatogonial differentiation. Coordinates oocyte differentiation without affecting meiosis I. The chain is Spermatogenesis- and oogenesis-specific basic helix-loop-helix-containing protein 1 (SOHLH1) from Homo sapiens (Human).